The sequence spans 1020 residues: Glucan endo-1,3-beta-D-glucosidase (1020 aa).

The first 25 residues, 1–25 (MKGKNVQLLFALVVIILLFPTGASA), serve as a signal peptide directing secretion. Residues 28-251 (HAVSVGKGSY…ADYIAIAKLP (224 aa)) form a beta-sandwich subdomain region. The 695-residue stretch at 28–722 (HAVSVGKGSY…HWIHNLAELG (695 aa)) folds into the GH81 domain. The alpha/beta subdomain stretch occupies residues 252-350 (EKDGNMLAKF…EGKRFTTELT (99 aa)). The (alpha/beta)6 barrel subdomain stretch occupies residues 360–722 (DLGDYDRERL…HWIHNLAELG (363 aa)). (1,3-beta-D-glucosyl)n is bound by residues Y387, K391, H458, D466, H470, D530, N540, E542, E546, E699, and R704. Residue D466 is part of the active site. Active-site residues include E542 and E546. The tract at residues 771-790 (HSFNIGNGDGPTNPDPSEPD) is disordered. The CBM6 domain occupies 796-922 (ERIQAEAYDA…LMNVNWFVFR (127 aa)). Residues E812, W825, D853, N878, D912, and N915 each contribute to the (1,3-beta-D-glucosyl)n site. One can recognise a CBM56 domain in the interval 928–1020 (NGDSHTHPDY…YTTEWFTYSR (93 aa)).

Belongs to the glycosyl hydrolase 81 family.

The protein localises to the secreted. It catalyses the reaction Hydrolysis of (1-&gt;3)-beta-D-glucosidic linkages in (1-&gt;3)-beta-D-glucans.. Cleaves internal linkages in 1,3-beta-glucan. May contribute to plant biomass degradation. The chain is Glucan endo-1,3-beta-D-glucosidase from Halalkalibacterium halodurans (strain ATCC BAA-125 / DSM 18197 / FERM 7344 / JCM 9153 / C-125) (Bacillus halodurans).